Reading from the N-terminus, the 345-residue chain is Hemin transport protein HmuS (345 aa).

The protein to Y.enterocolitica HemS.

Its function is as follows. Part of the binding-protein-dependent transport system for hemin. The polypeptide is Hemin transport protein HmuS (hmuS) (Yersinia pestis).